The following is a 565-amino-acid chain: Effector protease OspD3 (565 aa).

Belongs to the Toxin_15 family.

The protein localises to the secreted. Effector protease that disrupts necroptosis in host cells by mediating proteolytic cleavage of host RIPK1 and RIPK3. This is Effector protease OspD3 from Shigella flexneri.